The sequence spans 591 residues: MSNKRPNTTDGRTDLANGSLSSSPEEMSGAEEGRETSSGIEVEASDLSLSLTGDDGGPNRTSTESRGTDTESSGEEKDSDSMEDTGHYSINDESRGHGHSDEEDEEQPRHRGQRKRASRDQDSSDDERALEDWVSSETTALPRPRWQALPALRERELGSSARFVYEACGARVFVQRFRLQHGLEGHTGCVNTLHFNQRGTWLASGSDDLKVVVWDWVRRQPVLDFESGHKSNVFQAKFLPNSGDSTLAMCARDGQVRVAELSATQCCKNTKRVAQHKGASHKLALEPDSPCTFLSAGEDAVVFTIDLRQDRPASKLVVTKEKEKKVGLYTIYVNPANTHQFAVGGRDQYVRIYDQRKIDENENNGVLKKFCPHHLVNSESKANITCLVYSHDGTELLASYNDEDIYLFNSSHSDGAQYIKRYKGHRNNATVKGVNFYGPKSEFVVSGSDCGHIFLWEKSSCQIIQFMEGDKGGVVNCLEPHPHLPVLATSGLDHDVKIWAPTAEASTELTGLKEVIKKNKRERDEDSLHHTDLFDSHMLWFLMHHLRQRRHHRRWREPGVGATDADSDESPSSSDTSDEEEGPDRVQCMPS.

The span at 1–25 shows a compositional bias: polar residues; it reads MSNKRPNTTDGRTDLANGSLSSSPE. The tract at residues 1-140 is disordered; it reads MSNKRPNTTD…EDWVSSETTA (140 aa). Phosphoserine is present on residues Ser-22 and Ser-23. A Nuclear export signal motif is present at residues 40–51; sequence IEVEASDLSLSL. Basic and acidic residues-rich tracts occupy residues 66–100 and 118–131; these read RGTD…HGHS and SRDQ…RALE. Residues Ser-100, Ser-123, and Ser-124 each carry the phosphoserine modification. WD repeat units follow at residues 185–224, 228–269, 275–315, 323–363, 379–418, 426–466, and 470–509; these read GHTG…PVLD, GHKS…CCKN, QHKG…PASK, EKKV…ENEN, ESKA…GAQY, RNNA…IIQF, and DKGG…STEL. The residue at position 198 (Arg-198) is an Omega-N-methylarginine; by PRMT1. The interval 552 to 591 is disordered; the sequence is HRRWREPGVGATDADSDESPSSSDTSDEEEGPDRVQCMPS.

This sequence belongs to the WD repeat DCAF8 family. As to quaternary structure, interacts with DDB1, CUL4A and CUL4B. Interacts with KPNA1, KPNB1 and XPO1. In terms of tissue distribution, expressed in the brain.

The protein resides in the nucleus. It is found in the cytoplasm. The protein operates within protein modification; protein ubiquitination. May function as a substrate receptor for CUL4-DDB1 E3 ubiquitin-protein ligase complex. In Mus musculus (Mouse), this protein is DDB1- and CUL4-associated factor 8 (Dcaf8).